The primary structure comprises 68 residues: Large ribosomal subunit protein bL33c (68 aa).

It belongs to the bacterial ribosomal protein bL33 family.

It is found in the plastid. The protein resides in the chloroplast. The sequence is that of Large ribosomal subunit protein bL33c from Piper cenocladum (Ant piper).